The sequence spans 428 residues: Histidinol dehydrogenase (428 aa).

Residues Y124, Q186, and N209 each coordinate NAD(+). Substrate contacts are provided by S233, Q255, and H258. Positions 255 and 258 each coordinate Zn(2+). Catalysis depends on proton acceptor residues E322 and H323. Positions 323, 356, 410, and 415 each coordinate substrate. D356 is a Zn(2+) binding site. Position 415 (H415) interacts with Zn(2+).

The protein belongs to the histidinol dehydrogenase family. It depends on Zn(2+) as a cofactor.

The catalysed reaction is L-histidinol + 2 NAD(+) + H2O = L-histidine + 2 NADH + 3 H(+). The protein operates within amino-acid biosynthesis; L-histidine biosynthesis; L-histidine from 5-phospho-alpha-D-ribose 1-diphosphate: step 9/9. Functionally, catalyzes the sequential NAD-dependent oxidations of L-histidinol to L-histidinaldehyde and then to L-histidine. The sequence is that of Histidinol dehydrogenase from Bacteroides fragilis (strain YCH46).